The following is a 101-amino-acid chain: Apolipoprotein C-II (101 aa).

The N-terminal stretch at 1-22 is a signal peptide; that stretch reads MGARHLLALLLVLLVLGFEVQG. The segment at 66–74 is lipid binding; it reads TMDEKIRDM. A lipoprotein lipase cofactor region spans residues 78–101; the sequence is STAAVSTYVGIFTDQLLSLLKGDE.

Belongs to the apolipoprotein C2 family. Proapolipoprotein C-II is synthesized as a sialic acid containing glycoprotein which is subsequently desialylated prior to its proteolytic processing. Post-translationally, proapolipoprotein C-II, the major form found in plasma undergoes proteolytic cleavage of its N-terminal hexapeptide to generate apolipoprotein C-II, which occurs as the minor form in plasma.

It localises to the secreted. Functionally, component of chylomicrons, very low-density lipoproteins (VLDL), low-density lipoproteins (LDL), and high-density lipoproteins (HDL) in plasma. Plays an important role in lipoprotein metabolism as an activator of lipoprotein lipase. Both proapolipoprotein C-II and apolipoprotein C-II can activate lipoprotein lipase. In Tapirus indicus (Asiatic tapir), this protein is Apolipoprotein C-II (APOC2).